The primary structure comprises 131 residues: Profilin-3 (131 aa).

The cysteines at positions 13 and 115 are disulfide-linked. Positions alanine 81–threonine 97 match the Involved in PIP2 interaction motif. A Phosphothreonine modification is found at threonine 111.

Belongs to the profilin family. In terms of assembly, occurs in many kinds of cells as a complex with monomeric actin in a 1:1 ratio. Post-translationally, phosphorylated by MAP kinases.

The protein localises to the cytoplasm. The protein resides in the cytoskeleton. In terms of biological role, binds to actin and affects the structure of the cytoskeleton. At high concentrations, profilin prevents the polymerization of actin, whereas it enhances it at low concentrations. By binding to PIP2, it inhibits the formation of IP3 and DG. This Phleum pratense (Common timothy) protein is Profilin-3 (PRO3).